The sequence spans 115 residues: Large ribosomal subunit protein bL19 (115 aa).

It belongs to the bacterial ribosomal protein bL19 family.

Its function is as follows. This protein is located at the 30S-50S ribosomal subunit interface and may play a role in the structure and function of the aminoacyl-tRNA binding site. The protein is Large ribosomal subunit protein bL19 of Erwinia tasmaniensis (strain DSM 17950 / CFBP 7177 / CIP 109463 / NCPPB 4357 / Et1/99).